Reading from the N-terminus, the 145-residue chain is Putative pre-16S rRNA nuclease (145 aa).

Belongs to the YqgF nuclease family.

It is found in the cytoplasm. In terms of biological role, could be a nuclease involved in processing of the 5'-end of pre-16S rRNA. This Sulfurihydrogenibium sp. (strain YO3AOP1) protein is Putative pre-16S rRNA nuclease.